The following is a 436-amino-acid chain: Phosphatidylinositol transfer protein CSR1 (436 aa).

The segment at 85-104 is disordered; the sequence is VYDAEKVEDSDAEKEKPTPQ. The segment covering 86–102 has biased composition (basic and acidic residues); sequence YDAEKVEDSDAEKEKPT. The CRAL-TRIO domain occupies 188–347; that stretch reads KKGIVKQLEL…ELGGKDEYNF (160 aa).

The protein belongs to the PITP family. As to quaternary structure, binds phosphatidylinositol (PtdIns).

Its subcellular location is the cytoplasm. The protein resides in the endosome. Its function is as follows. Non-classical phosphatidylinositol (PtdIns) transfer protein (PITP), which exhibits PtdIns-binding/transfer activity in the absence of detectable PtdCho-binding/transfer activity. May also regulate post-Golgi membrane-trafficking events and have a role resistance to oxidative stress. The protein is Phosphatidylinositol transfer protein CSR1 (CSR1) of Eremothecium gossypii (strain ATCC 10895 / CBS 109.51 / FGSC 9923 / NRRL Y-1056) (Yeast).